A 723-amino-acid polypeptide reads, in one-letter code: Polyribonucleotide nucleotidyltransferase (723 aa).

Mg(2+) is bound by residues aspartate 488 and aspartate 494. A KH domain is found at 555 to 614 (PKIITLNIKPEKIKDVIGPGGKQINAIIEETGVKIDIEQDGTVYIASQDQAMNRKAIAII). Residues 624–692 (GEVYTGKVRR…HQGRVNLSRK (69 aa)) enclose the S1 motif domain. The interval 692 to 723 (KALLEKKEQPEGDKKPQAEKKFYPKTKKPESK) is disordered. Positions 693-723 (ALLEKKEQPEGDKKPQAEKKFYPKTKKPESK) are enriched in basic and acidic residues.

It belongs to the polyribonucleotide nucleotidyltransferase family. Mg(2+) is required as a cofactor.

The protein resides in the cytoplasm. It carries out the reaction RNA(n+1) + phosphate = RNA(n) + a ribonucleoside 5'-diphosphate. Its function is as follows. Involved in mRNA degradation. Catalyzes the phosphorolysis of single-stranded polyribonucleotides processively in the 3'- to 5'-direction. This Listeria welshimeri serovar 6b (strain ATCC 35897 / DSM 20650 / CCUG 15529 / CIP 8149 / NCTC 11857 / SLCC 5334 / V8) protein is Polyribonucleotide nucleotidyltransferase.